A 279-amino-acid polypeptide reads, in one-letter code: MTQFDKQYNSIIKDIINNGISDEEFDVRTKWDSDGTPAHTLSVMSKQMRFDNSEVPILTTKKVAWKTAIKELLWIWQLKSNDVTELNKMGVHIWDQWKQEDGTIGHAYGFQLGKKNRSLNGEKVDQVDYLLHQLKNNPSSRRHITMLWNPDDLDAMALTPCVYETQWYVKQGKLHLEVRARSNDMALGNPFNVFQYNVLQRMIAQVTGYELGEYIFNIGDCHVYTRHIDNLKIQMEREQFEAPELWINPEVKDFYNFTVDDFKLINYKHGDKLLFEVAV.

A dUMP-binding site is contributed by 141-142 (RR). Cys-161 functions as the Nucleophile in the catalytic mechanism. DUMP contacts are provided by residues 181 to 184 (RSND), Asn-192, and 222 to 224 (HVY). Asp-184 is a binding site for (6R)-5,10-methylene-5,6,7,8-tetrahydrofolate. Ala-278 is a binding site for (6R)-5,10-methylene-5,6,7,8-tetrahydrofolate.

This sequence belongs to the thymidylate synthase family. In terms of assembly, homodimer.

It catalyses the reaction dUMP + (6R)-5,10-methylene-5,6,7,8-tetrahydrofolate = 7,8-dihydrofolate + dTMP. The protein operates within pyrimidine metabolism; dTTP biosynthesis. In terms of biological role, provides the sole de novo source of dTMP for DNA biosynthesis. This Bacillus subtilis (Bacteriophage phi-3T) protein is Thymidylate synthase (thyP3).